We begin with the raw amino-acid sequence, 152 residues long: SsrA-binding protein (152 aa).

Belongs to the SmpB family.

Its subcellular location is the cytoplasm. In terms of biological role, required for rescue of stalled ribosomes mediated by trans-translation. Binds to transfer-messenger RNA (tmRNA), required for stable association of tmRNA with ribosomes. tmRNA and SmpB together mimic tRNA shape, replacing the anticodon stem-loop with SmpB. tmRNA is encoded by the ssrA gene; the 2 termini fold to resemble tRNA(Ala) and it encodes a 'tag peptide', a short internal open reading frame. During trans-translation Ala-aminoacylated tmRNA acts like a tRNA, entering the A-site of stalled ribosomes, displacing the stalled mRNA. The ribosome then switches to translate the ORF on the tmRNA; the nascent peptide is terminated with the 'tag peptide' encoded by the tmRNA and targeted for degradation. The ribosome is freed to recommence translation, which seems to be the essential function of trans-translation. The protein is SsrA-binding protein of Helicobacter pylori (strain HPAG1).